Consider the following 86-residue polypeptide: Acyl carrier protein (86 aa).

The region spanning 10–85 (DKIEQKVIEM…DVIKYIKERQ (76 aa)) is the Carrier domain. Ser45 carries the O-(pantetheine 4'-phosphoryl)serine modification.

It belongs to the acyl carrier protein (ACP) family. Post-translationally, 4'-phosphopantetheine is transferred from CoA to a specific serine of apo-ACP by AcpS. This modification is essential for activity because fatty acids are bound in thioester linkage to the sulfhydryl of the prosthetic group.

Its subcellular location is the cytoplasm. It participates in lipid metabolism; fatty acid biosynthesis. Functionally, carrier of the growing fatty acid chain in fatty acid biosynthesis. The protein is Acyl carrier protein of Rickettsia africae (strain ESF-5).